The chain runs to 275 residues: L-aspartate dehydrogenase (275 aa).

NAD(+) is bound by residues Ala-130 and Asn-196. His-226 is an active-site residue.

The protein belongs to the L-aspartate dehydrogenase family.

The enzyme catalyses L-aspartate + NADP(+) + H2O = oxaloacetate + NH4(+) + NADPH + H(+). The catalysed reaction is L-aspartate + NAD(+) + H2O = oxaloacetate + NH4(+) + NADH + H(+). It participates in cofactor biosynthesis; NAD(+) biosynthesis; iminoaspartate from L-aspartate (dehydrogenase route): step 1/1. In terms of biological role, specifically catalyzes the NAD or NADP-dependent dehydrogenation of L-aspartate to iminoaspartate. This is L-aspartate dehydrogenase from Ruegeria pomeroyi (strain ATCC 700808 / DSM 15171 / DSS-3) (Silicibacter pomeroyi).